We begin with the raw amino-acid sequence, 88 residues long: Protein LE25 (88 aa).

Residues 1 to 88 (MQTGKDAASA…YGATGNHTTF (88 aa)) form a disordered region. Residues 14–65 (GMEKTKANVQEKAERMTTRDPLKKEMATEKKEDRVAAAEMGKRDAKAQHAAE) are compositionally biased toward basic and acidic residues.

The protein belongs to the LEA type 1 family. Accumulates in developing seeds and drought-stressed leaves.

The protein is Protein LE25 (LE25) of Solanum lycopersicum (Tomato).